We begin with the raw amino-acid sequence, 309 residues long: L-lactate dehydrogenase 2 (309 aa).

NAD(+) contacts are provided by residues valine 16, aspartate 37, tyrosine 67, and 81–82; that span reads GV. Arginine 90 contributes to the substrate binding site. Residue serine 103 coordinates NAD(+). 122 to 125 contributes to the substrate binding site; sequence NPVD. Threonine 145 is an NAD(+) binding site. A substrate-binding site is contributed by 150 to 153; that stretch reads DTAR. Histidine 177 (proton acceptor) is an active-site residue. Threonine 227 is a binding site for substrate.

This sequence belongs to the LDH/MDH superfamily. LDH family. Homotetramer.

Its subcellular location is the cytoplasm. It carries out the reaction (S)-lactate + NAD(+) = pyruvate + NADH + H(+). Its pathway is fermentation; pyruvate fermentation to lactate; (S)-lactate from pyruvate: step 1/1. Functionally, catalyzes the conversion of lactate to pyruvate. In Lactiplantibacillus plantarum (strain ATCC BAA-793 / NCIMB 8826 / WCFS1) (Lactobacillus plantarum), this protein is L-lactate dehydrogenase 2.